The sequence spans 218 residues: Pyridoxine/pyridoxamine 5'-phosphate oxidase (218 aa).

Substrate is bound by residues 14 to 17 and lysine 72; that span reads RREY. Residues 67-72, 82-83, arginine 88, lysine 89, and glutamine 111 each bind FMN; these read RIVLLK and YT. Positions 129, 133, and 137 each coordinate substrate. FMN is bound by residues 146–147 and tryptophan 191; that span reads QS. 197–199 lines the substrate pocket; that stretch reads RLH. Arginine 201 lines the FMN pocket.

The protein belongs to the pyridoxamine 5'-phosphate oxidase family. As to quaternary structure, homodimer. The cofactor is FMN.

The enzyme catalyses pyridoxamine 5'-phosphate + O2 + H2O = pyridoxal 5'-phosphate + H2O2 + NH4(+). The catalysed reaction is pyridoxine 5'-phosphate + O2 = pyridoxal 5'-phosphate + H2O2. Its pathway is cofactor metabolism; pyridoxal 5'-phosphate salvage; pyridoxal 5'-phosphate from pyridoxamine 5'-phosphate: step 1/1. The protein operates within cofactor metabolism; pyridoxal 5'-phosphate salvage; pyridoxal 5'-phosphate from pyridoxine 5'-phosphate: step 1/1. Functionally, catalyzes the oxidation of either pyridoxine 5'-phosphate (PNP) or pyridoxamine 5'-phosphate (PMP) into pyridoxal 5'-phosphate (PLP). The protein is Pyridoxine/pyridoxamine 5'-phosphate oxidase of Klebsiella pneumoniae subsp. pneumoniae (strain ATCC 700721 / MGH 78578).